Here is a 433-residue protein sequence, read N- to C-terminus: Glutamyl-tRNA reductase (433 aa).

Substrate-binding positions include 49 to 52, S109, 114 to 116, and Q120; these read TCNR and EGQ. C50 acts as the Nucleophile in catalysis. Position 189–194 (189–194) interacts with NADP(+); it reads GAGKMS.

This sequence belongs to the glutamyl-tRNA reductase family. In terms of assembly, homodimer.

It carries out the reaction (S)-4-amino-5-oxopentanoate + tRNA(Glu) + NADP(+) = L-glutamyl-tRNA(Glu) + NADPH + H(+). The protein operates within porphyrin-containing compound metabolism; protoporphyrin-IX biosynthesis; 5-aminolevulinate from L-glutamyl-tRNA(Glu): step 1/2. It functions in the pathway porphyrin-containing compound metabolism; chlorophyll biosynthesis. Its function is as follows. Catalyzes the NADPH-dependent reduction of glutamyl-tRNA(Glu) to glutamate 1-semialdehyde (GSA). The polypeptide is Glutamyl-tRNA reductase (Acaryochloris marina (strain MBIC 11017)).